Consider the following 159-residue polypeptide: Large ribosomal subunit protein uL13 (159 aa).

This sequence belongs to the universal ribosomal protein uL13 family. Part of the 50S ribosomal subunit.

Its function is as follows. This protein is one of the early assembly proteins of the 50S ribosomal subunit, although it is not seen to bind rRNA by itself. It is important during the early stages of 50S assembly. The sequence is that of Large ribosomal subunit protein uL13 from Methanopyrus kandleri (strain AV19 / DSM 6324 / JCM 9639 / NBRC 100938).